The chain runs to 381 residues: Guanine nucleotide-binding protein G(olf) subunit alpha (381 aa).

The tract at residues 1–25 (MGCLGGNSKTTEDQGVDEKERREAN) is disordered. The N-palmitoyl glycine moiety is linked to residue G2. A lipid anchor (S-palmitoyl cysteine) is attached at C3. A compositionally biased stretch (basic and acidic residues) spans 10–25 (TTEDQGVDEKERREAN). The G-alpha domain maps to 41 to 381 (ATHRLLLLGA…RMHLKQYELL (341 aa)). Residues 44–57 (RLLLLGAGESGKST) form a G1 motif region. Residues E52, S53, G54, K55, S56, and T57 each contribute to the GTP site. Residue S56 participates in Mg(2+) binding. Position 178 is a phosphothreonine (T178). Positions 183–191 (DLLRCRVLT) are G2 motif. GTP contacts are provided by L185 and R186. At R188 the chain carries ADP-ribosylarginine; by cholera toxin. T191 is a binding site for GTP. Mg(2+) is bound by residues T191 and D210. The G3 motif stretch occupies residues 206–215 (FHMFDVGGQR). 5 residues coordinate GTP: G213, N279, K280, D282, and A353. The interval 275 to 282 (ILFLNKQD) is G4 motif. The segment at 351-356 (TCAVDT) is G5 motif.

This sequence belongs to the G-alpha family. G(s) subfamily. In terms of assembly, g proteins are composed of 3 units; alpha, beta and gamma. The alpha chain contains the guanine nucleotide binding site. Interacts with GAS2L2. Interacts (GDP-bound form) with RIC8B (via C-terminus); promoting GNAL folding and association with the plasma membrane. As to expression, detected in olfactory neuroepithelium, brain, testis, and to a lower extent in retina, lung alveoli, spleen. Trace amounts where seen in kidney, adrenal gland and liver. Found to be expressed in all the insulinomas examined.

The protein resides in the cell membrane. It catalyses the reaction GTP + H2O = GDP + phosphate + H(+). Guanine nucleotide-binding protein (G protein) involved as transducer in olfactory signal transduction controlled by G protein-coupled receptors (GPCRs). Contains the guanine nucleotide binding site and alternates between an active, GTP-bound state and an inactive, GDP-bound state. Signaling by an activated GPCR promotes GDP release and GTP binding. The alpha subunit has a low GTPase activity that converts bound GTP to GDP, thereby terminating the signal. Both GDP release and GTP hydrolysis are modulated by numerous regulatory proteins. GNAL/G(olf) alpha specifically mediates olfactory signal transduction within the olfactory neuroepithelium and the basal ganglia following GPCRs activation. Acts by promoting the specific activation of adenylyl cyclase ADCY3, resulting in increased levels of the signaling molecule cAMP. This is Guanine nucleotide-binding protein G(olf) subunit alpha from Homo sapiens (Human).